Consider the following 424-residue polypeptide: MSKYALLQKMIINELLFLNDNVNYATNKLFSKDQANGELHKLLAMLLNYKKSNENAPNIKFDLKNLSFMLENKDKIDIIQFDDIKNYVQPAIVNLFESHNRSLNNYSTELSTLLEDGNENLVPNITDIDNIKLSHMQLARLLCYTAVVESRNSKPWKAIFNNDTNVLTDSFFNHIMNILNMIKTNQGSLAHNVSVVYHIENIQMNLENKLKPRSITIETVDKDKFENKHSDIEVCYVMNNSLHPQDVNSQQTLMCSSFVELNVLPFCLYNDTLPDDQSMSVFNLYKFEQTKNKSVSKPSRLGNVMFVNSLIDKPITRETIVNIINSYHNACQNLKRSGHRVVGDYRAYERDYKLAALDFIILMLVTSITHRTLKYNMLNIHEKMFQELKTVVCKHNAAKLYDILINYDINKEPLNNFRYNYEVL.

It is found in the host cytoplasm. In terms of biological role, plays a role in per os infectivity in vivo. Facilitates embedding of occlusion-derived viruses (ODVs) into occlusion bodies (OBs). The polypeptide is Protein ORF114 (Lepidoptera (butterflies and moths)).